A 648-amino-acid chain; its full sequence is Threonine--tRNA ligase (648 aa).

One can recognise a TGS domain in the interval 1 to 61 (MIKITLPDGS…TTDGSLVLYT (61 aa)). Positions 240 to 539 (DHRKLGKELE…LLEHTAGNFP (300 aa)) are catalytic. Zn(2+)-binding residues include Cys335, His386, and His516.

Belongs to the class-II aminoacyl-tRNA synthetase family. As to quaternary structure, homodimer. It depends on Zn(2+) as a cofactor.

It is found in the cytoplasm. It catalyses the reaction tRNA(Thr) + L-threonine + ATP = L-threonyl-tRNA(Thr) + AMP + diphosphate + H(+). In terms of biological role, catalyzes the attachment of threonine to tRNA(Thr) in a two-step reaction: L-threonine is first activated by ATP to form Thr-AMP and then transferred to the acceptor end of tRNA(Thr). Also edits incorrectly charged L-seryl-tRNA(Thr). The protein is Threonine--tRNA ligase of Flavobacterium psychrophilum (strain ATCC 49511 / DSM 21280 / CIP 103535 / JIP02/86).